Reading from the N-terminus, the 269-residue chain is Probable molybdenum ABC transporter permease protein HVO_B0370 (269 aa).

Helical transmembrane passes span Leu26–Ala46, Val69–Trp89, Val100–Leu120, Ser140–Ala160, Ile198–Met218, and Phe243–Leu263. An ABC transmembrane type-1 domain is found at Ala65–Leu258.

It belongs to the binding-protein-dependent transport system permease family. As to quaternary structure, the complex is composed of two ATP-binding proteins, two transmembrane proteins (HVO_B0370) and a solute-binding protein (HVO_B0369).

Its subcellular location is the cell membrane. Part of an ABC transporter complex involved in molybdenum import. Responsible for the translocation of the substrate across the membrane. The polypeptide is Probable molybdenum ABC transporter permease protein HVO_B0370 (Haloferax volcanii (strain ATCC 29605 / DSM 3757 / JCM 8879 / NBRC 14742 / NCIMB 2012 / VKM B-1768 / DS2) (Halobacterium volcanii)).